We begin with the raw amino-acid sequence, 628 residues long: WW domain-containing adapter protein with coiled-coil (628 aa).

Disordered stretches follow at residues 1 to 130 (MVMY…DDWS), 152 to 338 (EKPK…PQSP), and 417 to 532 (NQSP…SARS). Over residues 37-49 (SSDHRHDKMRDST) the composition is skewed to basic and acidic residues. Residues 74–84 (GKAKSMHLHRV) show a composition bias toward basic residues. The span at 101–121 (NHSAIHSSNSHSSTPSKTSDS) shows a compositional bias: low complexity. In terms of domain architecture, WW spans 123 to 156 (YDPADDWSEHISSSGKKYYYNCRTEVSQWEKPKE). Composition is skewed to basic and acidic residues over residues 152–168 (EKPK…KETS) and 176–185 (PKDRDYRREA). Positions 199–213 (DTSTMLPQNILSQTS) are enriched in polar residues. Residues 214-227 (RHNDRDYRLPRTDS) are compositionally biased toward basic and acidic residues. 2 stretches are compositionally biased toward low complexity: residues 230–260 (SAAP…TVQP) and 299–331 (SDKS…TVPV). Positions 420–446 (PMSLTSDASSPRSYVSPRISTPQTNTV) are enriched in polar residues. A compositionally biased stretch (low complexity) spans 467–486 (GSKQGSSAQTASQQSSAADK). The segment covering 511-532 (PNHNSSTCASSTSAPQNSSARS) has biased composition (polar residues). A coiled-coil region spans residues 599–625 (QATLREQRILFLRQQIKELEKLKNQNS).

The protein localises to the nucleus. Its function is as follows. Acts as a linker between gene transcription and histone H2B monoubiquitination at 'Lys-120' (H2BK120ub1). Positive regulator of amino acid starvation-induced autophagy. Positively regulates MTOR activity. May negatively regulate the ubiquitin proteasome pathway. The polypeptide is WW domain-containing adapter protein with coiled-coil (wac) (Xenopus tropicalis (Western clawed frog)).